Consider the following 381-residue polypeptide: uncharacterized protein (381 aa).

Residues G3–A23 traverse the membrane as a helical segment.

Belongs to the band 7/mec-2 family.

It is found in the membrane. This is an uncharacterized protein from Mycobacterium bovis (strain ATCC BAA-935 / AF2122/97).